We begin with the raw amino-acid sequence, 246 residues long: Small ribosomal subunit protein uS3 (246 aa).

The region spanning 23 to 94 (LNEFLTRELA…RIELYAEKVA (72 aa)) is the KH type-2 domain. Residues 201 to 246 (GPKKPLPDNVSVVEPKEEKIYETPETEYKIPPPSKPLDDLSEAKVL) form a disordered region. Composition is skewed to basic and acidic residues over residues 214-228 (EPKE…ETEY) and 236-246 (PLDDLSEAKVL). A phosphothreonine mark is found at T223 and T226. S241 bears the Phosphoserine mark.

The protein belongs to the universal ribosomal protein uS3 family. Interacts with LTV1; the interaction is RNA-independent.

The protein resides in the cytoplasm. The protein localises to the nucleus. Functionally, has DNA repair activity directed towards the mutagenic lesions 8-oxoguanine and abasic sites in DNA. It can cleave DNA containing 8-oxoguanine residues efficiently. Also acts as an ap lyase, cleaving phosphodiester bonds via a beta,delta elimination reaction. This is Small ribosomal subunit protein uS3 (RpS3) from Drosophila melanogaster (Fruit fly).